We begin with the raw amino-acid sequence, 213 residues long: Ferric nitrobindin-like protein (213 aa).

The disordered stretch occupies residues 17–42; sequence VNLAAEQSKSTSDKNLPEFGDMPIPD. A GXWXGXG motif is present at residues 65 to 71; sequence GVWRGQG.

It belongs to the nitrobindin family.

The sequence is that of Ferric nitrobindin-like protein from Corynebacterium jeikeium (strain K411).